We begin with the raw amino-acid sequence, 167 residues long: Ureidoglycolate lyase (167 aa).

Belongs to the ureidoglycolate lyase family. Homodimer. Ni(2+) serves as cofactor.

The enzyme catalyses (S)-ureidoglycolate = urea + glyoxylate. It functions in the pathway nitrogen metabolism; (S)-allantoin degradation. Functionally, catalyzes the catabolism of the allantoin degradation intermediate (S)-ureidoglycolate, generating urea and glyoxylate. Involved in the utilization of allantoin as nitrogen source. The sequence is that of Ureidoglycolate lyase from Pseudomonas entomophila (strain L48).